Consider the following 603-residue polypeptide: Protein Spindly (603 aa).

Position 1 is an N-acetylmethionine (M1). Positions 1–442 (MESDVIADLR…LKLKYEPEEK (442 aa)) form a coiled coil. S513 and S553 each carry phosphoserine. Residues 542-577 (ALSERSRNTPNSPRLAAESRLQREVKQGKETASKLE) form a disordered region. The segment covering 561 to 577 (RLQREVKQGKETASKLE) has biased composition (basic and acidic residues).

This sequence belongs to the Spindly family. Interacts with KNTC1 and ZW10. These interactions appear weak and may be transient or indirect. Interacts with dynein intermediate chain and dynactin (DCTN1). Interacts with the catalytically active form of USP45. Post-translationally, monoubiquitinated with'Lys-48' linkage. Deubiquitinated by USP45.

It is found in the cytoplasm. The protein localises to the cytoskeleton. The protein resides in the microtubule organizing center. It localises to the centrosome. Its subcellular location is the chromosome. It is found in the centromere. The protein localises to the kinetochore. The protein resides in the nucleus. It localises to the spindle pole. In terms of biological role, required for the localization of dynein and dynactin to the mitotic kintochore. Dynein is believed to control the initial lateral interaction between the kinetochore and spindle microtubules and to facilitate the subsequent formation of end-on kinetochore-microtubule attachments mediated by the NDC80 complex. Also required for correct spindle orientation. Does not appear to be required for the removal of spindle assembly checkpoint (SAC) proteins from the kinetochore upon bipolar spindle attachment. Acts as an adapter protein linking the dynein motor complex to various cargos and converts dynein from a non-processive to a highly processive motor in the presence of dynactin. Facilitates the interaction between dynein and dynactin and activates dynein processivity (the ability to move along a microtubule for a long distance without falling off the track). Plays a role in cell migration. This Bos taurus (Bovine) protein is Protein Spindly.